The sequence spans 202 residues: MKAFTRLDGRAAPLELANIDTDQIIPKQFLKTVEREGLAKGLFYDFRFDADGNEISDFVLNKPEYKSASVLIAGDNFGCGSSREHAPWALMDFGIMCVISTSFADIFNNNCFNNGLLPVVVSPEDLALLMDEAKGGNHMVSVDLEAQTVISPSGKTIGFDIDPVRKEKMLKGLDAIGETMMHGGDIDLFESKRAISQPWLEA.

The protein belongs to the LeuD family. LeuD type 1 subfamily. Heterodimer of LeuC and LeuD.

It catalyses the reaction (2R,3S)-3-isopropylmalate = (2S)-2-isopropylmalate. The protein operates within amino-acid biosynthesis; L-leucine biosynthesis; L-leucine from 3-methyl-2-oxobutanoate: step 2/4. Functionally, catalyzes the isomerization between 2-isopropylmalate and 3-isopropylmalate, via the formation of 2-isopropylmaleate. This chain is 3-isopropylmalate dehydratase small subunit, found in Caulobacter vibrioides (strain ATCC 19089 / CIP 103742 / CB 15) (Caulobacter crescentus).